The sequence spans 364 residues: Natterin-3 (364 aa).

A signal peptide spans 1 to 18; it reads MKLSVLVVTLLAVSWTSA. The propeptide occupies 19–42; sequence QPETFSIQTKEANMNPEPANIRVA.

The protein belongs to the natterin family. Contains 4 disulfide bonds. In terms of tissue distribution, expressed by the venom gland.

It is found in the secreted. Its activity is regulated as follows. Inhibited by tissue-kallikrein inhibitor TKI and trasylol. Plasma kallikrein inhibitor PKSI527 and classical inhibitors of serine-, metallo-, thiol- or aspartate-peptidases evokes a minor inhibition of the peptide digestion. In terms of biological role, shows nociceptive, edema-inducing and kininogenase activity with release of kallidin from low molecular weight kininogen. The cleavage occurs at Met-Lys bonds. This is Natterin-3 from Thalassophryne nattereri (Copper Joe toadfish).